We begin with the raw amino-acid sequence, 85 residues long: Large ribosomal subunit protein bL27 (85 aa).

Residues 1-20 form a disordered region; it reads MAHKKAGGSSRNGRDSEAKR.

This sequence belongs to the bacterial ribosomal protein bL27 family.

The protein is Large ribosomal subunit protein bL27 of Aeromonas salmonicida (strain A449).